The sequence spans 499 residues: Cytochrome P450 monooxygenase ausI (499 aa).

The chain crosses the membrane as a helical span at residues 10-30 (PLGQPLIAGFVVVSAVLYLLY). Cys439 is a heme binding site. N-linked (GlcNAc...) asparagine glycosylation occurs at Asn483.

Belongs to the cytochrome P450 family. Requires heme as cofactor.

It is found in the membrane. The protein operates within secondary metabolite biosynthesis; terpenoid biosynthesis. Cytochrome P450 monooxygenase; part of the gene cluster B that mediates the biosynthesis of austinol and dehydroaustinol, two fungal meroterpenoids. The first step of the pathway is the synthesis of 3,5-dimethylorsellinic acid by the polyketide synthase ausA. 3,5-dimethylorsellinic acid is then prenylated by the polyprenyl transferase ausN. Further epoxidation by the FAD-dependent monooxygenase ausM and cyclization by the probable terpene cyclase ausL lead to the formation of protoaustinoid A. Protoaustinoid A is then oxidized to spiro-lactone preaustinoid A3 by the combined action of the FAD-binding monooxygenases ausB and ausC, and the dioxygenase ausE. Acid-catalyzed keto-rearrangement and ring contraction of the tetraketide portion of preaustinoid A3 by ausJ lead to the formation of preaustinoid A4. The aldo-keto reductase ausK, with the help of ausH, is involved in the next step by transforming preaustinoid A4 into isoaustinone which is in turn hydroxylated by the P450 monooxygenase ausI to form austinolide. Finally, the cytochrome P450 monooxygenase ausG modifies austinolide to austinol. Austinol can be further modified to dehydroaustinol which forms a diffusible complex with diorcinol that initiates conidiation. Due to genetic rearrangements of the clusters and the subsequent loss of some enzymes, the end products of the Emericella nidulans austinoid biosynthesis clusters are austinol and dehydroaustinol, even if additional enzymes, such as the O-acetyltransferase ausQ and the cytochrome P450 monooxygenase ausR are still functional. This is Cytochrome P450 monooxygenase ausI from Emericella nidulans (strain FGSC A4 / ATCC 38163 / CBS 112.46 / NRRL 194 / M139) (Aspergillus nidulans).